The chain runs to 447 residues: UPF0597 protein Amet_4665 (447 aa).

Belongs to the UPF0597 family.

This Alkaliphilus metalliredigens (strain QYMF) protein is UPF0597 protein Amet_4665.